The primary structure comprises 436 residues: Probable 4-aminobutyrate aminotransferase (436 aa).

Lysine 281 is subject to N6-(pyridoxal phosphate)lysine.

Belongs to the class-III pyridoxal-phosphate-dependent aminotransferase family. It depends on pyridoxal 5'-phosphate as a cofactor.

It carries out the reaction 4-aminobutanoate + 2-oxoglutarate = succinate semialdehyde + L-glutamate. The catalysed reaction is (S)-3-amino-2-methylpropanoate + 2-oxoglutarate = 2-methyl-3-oxopropanoate + L-glutamate. It functions in the pathway amino-acid degradation; 4-aminobutanoate degradation. The polypeptide is Probable 4-aminobutyrate aminotransferase (gabT) (Bacillus subtilis (strain 168)).